Reading from the N-terminus, the 206-residue chain is Hypoxanthine-guanine phosphoribosyltransferase (206 aa).

GMP contacts are provided by residues 110 to 118, lysine 154, and 181 to 187; these read DEVDDTRTT and WIMYPWE. The active-site Proton acceptor is the aspartate 114.

Belongs to the purine/pyrimidine phosphoribosyltransferase family. Dimer. The cofactor is Mg(2+).

It localises to the endoplasmic reticulum. It carries out the reaction IMP + diphosphate = hypoxanthine + 5-phospho-alpha-D-ribose 1-diphosphate. The enzyme catalyses GMP + diphosphate = guanine + 5-phospho-alpha-D-ribose 1-diphosphate. Converts guanine to guanosine monophosphate, and hypoxanthine to inosine monophosphate. Transfers the 5-phosphoribosyl group from 5-phosphoribosylpyrophosphate onto the purine. Plays a central role in the generation of purine nucleotides through the purine salvage pathway. This is Hypoxanthine-guanine phosphoribosyltransferase (hpt1) from Schizosaccharomyces pombe (strain 972 / ATCC 24843) (Fission yeast).